The sequence spans 213 residues: UPF0502 protein Daro_2469 (213 aa).

This sequence belongs to the UPF0502 family.

This is UPF0502 protein Daro_2469 from Dechloromonas aromatica (strain RCB).